The sequence spans 391 residues: Chaperone protein DnaJ (391 aa).

A J domain is found at 6-71; the sequence is CYYEVLKVER…NKRARYDQYG (66 aa). The CR-type zinc finger occupies 137-215; it reads GCHKDIVFRR…CRGTGTQNEK (79 aa). Zn(2+) contacts are provided by Cys-150, Cys-153, Cys-167, Cys-170, Cys-189, Cys-192, Cys-203, and Cys-206. CXXCXGXG motif repeat units lie at residues 150–157, 167–174, 189–196, and 203–210; these read CDTCDGSG, CTMCGGQG, CPTCKGAG, and CGKCRGTG. The interval 372–391 is disordered; that stretch reads FFDPEPEEAGTGSTDTEKDS.

The protein belongs to the DnaJ family. Homodimer. Zn(2+) serves as cofactor.

The protein localises to the cytoplasm. Participates actively in the response to hyperosmotic and heat shock by preventing the aggregation of stress-denatured proteins and by disaggregating proteins, also in an autonomous, DnaK-independent fashion. Unfolded proteins bind initially to DnaJ; upon interaction with the DnaJ-bound protein, DnaK hydrolyzes its bound ATP, resulting in the formation of a stable complex. GrpE releases ADP from DnaK; ATP binding to DnaK triggers the release of the substrate protein, thus completing the reaction cycle. Several rounds of ATP-dependent interactions between DnaJ, DnaK and GrpE are required for fully efficient folding. Also involved, together with DnaK and GrpE, in the DNA replication of plasmids through activation of initiation proteins. This Rhodopirellula baltica (strain DSM 10527 / NCIMB 13988 / SH1) protein is Chaperone protein DnaJ.